A 278-amino-acid polypeptide reads, in one-letter code: Biotin synthase (278 aa).

A Radical SAM core domain is found at 1 to 227 (MQIMLCAISN…QSVVMVAGGR (227 aa)). Positions 16, 20, and 23 each coordinate [4Fe-4S] cluster. [2Fe-2S] cluster-binding residues include cysteine 60, cysteine 95, and cysteine 153.

The protein belongs to the radical SAM superfamily. Biotin synthase family. Homodimer. [4Fe-4S] cluster is required as a cofactor. [2Fe-2S] cluster serves as cofactor.

It catalyses the reaction (4R,5S)-dethiobiotin + (sulfur carrier)-SH + 2 reduced [2Fe-2S]-[ferredoxin] + 2 S-adenosyl-L-methionine = (sulfur carrier)-H + biotin + 2 5'-deoxyadenosine + 2 L-methionine + 2 oxidized [2Fe-2S]-[ferredoxin]. It functions in the pathway cofactor biosynthesis; biotin biosynthesis; biotin from 7,8-diaminononanoate: step 2/2. Its function is as follows. Catalyzes the conversion of dethiobiotin (DTB) to biotin by the insertion of a sulfur atom into dethiobiotin via a radical-based mechanism. This is Biotin synthase from Campylobacter jejuni (strain RM1221).